The chain runs to 108 residues: Urease subunit beta (108 aa).

It belongs to the urease beta subunit family. Probable heterotrimer of UreA (gamma), UreB (beta) and UreC (alpha) subunits. Three heterotrimers associate to form the active enzyme. The trimeric urease interacts with an accessory complex composed of UreD, UreF and UreG, which is required for the assembly of the nickel containing metallocenter of UreC. The UreE protein may also play a direct role in nickel transfer to the urease apoprotein.

Its subcellular location is the cytoplasm. It carries out the reaction urea + 2 H2O + H(+) = hydrogencarbonate + 2 NH4(+). The protein operates within nitrogen metabolism; urea degradation; CO(2) and NH(3) from urea (urease route): step 1/1. The protein is Urease subunit beta of Proteus mirabilis (strain HI4320).